We begin with the raw amino-acid sequence, 242 residues long: Ribonuclease PH (242 aa).

Residues Arg86 and 124–126 (GTR) contribute to the phosphate site.

The protein belongs to the RNase PH family. As to quaternary structure, homohexameric ring arranged as a trimer of dimers.

The catalysed reaction is tRNA(n+1) + phosphate = tRNA(n) + a ribonucleoside 5'-diphosphate. Phosphorolytic 3'-5' exoribonuclease that plays an important role in tRNA 3'-end maturation. Removes nucleotide residues following the 3'-CCA terminus of tRNAs; can also add nucleotides to the ends of RNA molecules by using nucleoside diphosphates as substrates, but this may not be physiologically important. Probably plays a role in initiation of 16S rRNA degradation (leading to ribosome degradation) during starvation. The protein is Ribonuclease PH of Bacillus pumilus (strain SAFR-032).